A 213-amino-acid polypeptide reads, in one-letter code: Protein HSH49 (213 aa).

RRM domains are found at residues 9–88 and 108–185; these read NTVY…QVTN and AKLF…YAFK.

In terms of assembly, interacts with RDS3.

The protein localises to the nucleus. Functionally, possible SF3b-like factor. This chain is Protein HSH49 (HSH49), found in Saccharomyces cerevisiae (strain ATCC 204508 / S288c) (Baker's yeast).